Reading from the N-terminus, the 305-residue chain is NADH-cytochrome b5 reductase 1 (305 aa).

Residues 8–28 (VLLASLGVGLFTLFGLALGTY) form a helical membrane-spanning segment. The 113-residue stretch at 44–156 (DEKYLLRLLD…RGPSGLLSYA (113 aa)) folds into the FAD-binding FR-type domain. FAD contacts are provided by residues 136-166 (DSLKIGDVVEFRGPSGLLSYAGKGNFNIQPN) and 175-210 (VAKKLGMIAGGTGITPMLQLIRAILKVPEDPTQCFL).

Belongs to the flavoprotein pyridine nucleotide cytochrome reductase family. FAD serves as cofactor.

The protein resides in the membrane. It catalyses the reaction 2 Fe(III)-[cytochrome b5] + NADH = 2 Fe(II)-[cytochrome b5] + NAD(+) + H(+). Functionally, NADH-cytochrome b5 reductases are involved in desaturation and elongation of fatty acids, cholesterol biosynthesis, drug metabolism, and, in erythrocyte, methemoglobin reduction. The protein is NADH-cytochrome b5 reductase 1 (Cyb5r1) of Rattus norvegicus (Rat).